Reading from the N-terminus, the 544-residue chain is Elongator complex protein 3 (544 aa).

Residues 79-369 (RTASGIAVVA…YRIQRDIPMP (291 aa)) enclose the Radical SAM core domain. [4Fe-4S] cluster is bound by residues Cys96, Cys106, and Cys109. Residues Lys161, 472–475 (ELHV), 495–497 (FGT), and Tyr528 each bind acetyl-CoA. An N-acetyltransferase domain is found at 393 to 544 (TKCRDIRARE…LDGPYMSKWL (152 aa)).

It belongs to the ELP3 family. As to quaternary structure, component of the elongator complex. It depends on [4Fe-4S] cluster as a cofactor.

The protein resides in the cytoplasm. It catalyses the reaction uridine(34) in tRNA + acetyl-CoA + S-adenosyl-L-methionine + H2O = 5-(carboxymethyl)uridine(34) in tRNA + 5'-deoxyadenosine + L-methionine + CoA + 2 H(+). It functions in the pathway tRNA modification; 5-methoxycarbonylmethyl-2-thiouridine-tRNA biosynthesis. Its function is as follows. Catalytic tRNA acetyltransferase subunit of the elongator complex which is required for multiple tRNA modifications, including mcm5U (5-methoxycarbonylmethyl uridine), mcm5s2U (5-methoxycarbonylmethyl-2-thiouridine), and ncm5U (5-carbamoylmethyl uridine). In the elongator complex, acts as a tRNA uridine(34) acetyltransferase, which mediates formation of carboxymethyluridine in the wobble base at position 34 in tRNAs. This is Elongator complex protein 3 from Schizosaccharomyces pombe (strain 972 / ATCC 24843) (Fission yeast).